Reading from the N-terminus, the 133-residue chain is MSIRSKFNKDEKKFVKFIDSTEEIIKHLNKSDSSKRSRLKLSGQQIDVLESNFKIDSHPNSATKSLLSNALSIPLKNIQIWFQNRRAKEKTARDGGRRRSGNAEIEDGEYEHGKMSYQAMCPFDFPPQERYFL.

Positions 34 to 93 (SKRSRLKLSGQQIDVLESNFKIDSHPNSATKSLLSNALSIPLKNIQIWFQNRRAKEKTAR) form a DNA-binding region, homeobox. The segment at 86–109 (RAKEKTARDGGRRRSGNAEIEDGE) is disordered.

It is found in the nucleus. The sequence is that of Homeobox protein HD-5 (HD-5) from Encephalitozoon cuniculi (strain GB-M1) (Microsporidian parasite).